Consider the following 2332-residue polypeptide: Genome polyprotein (2332 aa).

Residues 1–201 (MNTTDCFIAL…WKAKVQRKLK (201 aa)) form the Peptidase C28 domain. Residues 1 to 1480 (MNTTDCFIAL…SFVKRAFKRL (1480 aa)) are Cytoplasmic-facing. Active-site for leader protease activity residues include Cys-51, His-148, and Asp-163. 2 disordered regions span residues 197 to 218 (QRKL…QSGN) and 238 to 265 (QLGD…NTQN). Gly-202 is lipidated: N-myristoyl glycine; by host. 2 stretches are compositionally biased toward polar residues: residues 204-218 (GQSS…QSGN) and 238-251 (QLGD…SNEG). A compositionally biased stretch (low complexity) spans 252–265 (STDTTSTHTTNTQN). Cysteines 406 and 858 form a disulfide. An antigenic epitope region spans residues 788-796 (ALLRASTYY). The Cell attachment site signature appears at 869 to 871 (RGD). The SF3 helicase domain occupies 1189-1353 (NVHIANLCKV…DGYKINSKLD (165 aa)). An ATP-binding site is contributed by 1217–1224 (GKSGQGKS). An intramembrane segment occupies 1481–1501 (KENFEIVALCLTLLANIVIMI). Residues 1502–2332 (RETRKRQKMV…RWVNAVCGDA (831 aa)) are Cytoplasmic-facing. The segment covering 1529-1538 (KTLDEAEKSP) has biased composition (basic and acidic residues). Residues 1529–1584 (KTLDEAEKSPLETSGASTVGFRERTLPGQKACDDVNSEPAQPVEEQPQAEGPYAGP) form a disordered region. Tyr-1581, Tyr-1604, and Tyr-1628 each carry O-(5'-phospho-RNA)-tyrosine. Residues 1652-1848 (APPTDLQKMV…YCSCVSRSML (197 aa)) enclose the Peptidase C3 domain. His-1695 (for protease 3C activity; Proton donor/acceptor) is an active-site residue. Active-site for protease 3C activity residues include Asp-1733 and Cys-1812. Short sequence motifs (nuclear localization signal) lie at residues 1878-1886 (MRKTKLAPT) and 1879-1886 (RKTKLAPT). Positions 2096–2214 (RNVWDVDYSA…ASDYDLDFEA (119 aa)) constitute a RdRp catalytic domain. Asp-2200 acts as the For RdRp activity in catalysis.

This sequence belongs to the picornaviruses polyprotein family. In terms of assembly, interacts with host ISG15. As to quaternary structure, interacts (via R-G-D motif) with host ITGAV/ITGB6. Interacts with host MAVS; this interaction inhibits binding of host TRAF3 to MAVS, thereby suppressing interferon-mediated responses. Forms homooligomers. In terms of assembly, homohexamer. Interacts with host VIM. Interacts with host BECN1. As to quaternary structure, interacts with host DCTN3. Interacts with RNA-dependent RNA polymerase; this interaction allows 3B-1 to binds 2 polymerases and act as a primer. It also allows the recruitment of the RNA-dependent RNA polymerase to host membranes. In terms of assembly, interacts with RNA-dependent RNA polymerase; this interaction allows 3B-2 to act as a primer. As to quaternary structure, interacts with RNA-dependent RNA polymerase; this interaction allows 3B-3 to act as a primer. Interacts with 3B-1; this interaction allows 3B-1 to binds 2 polymerases and act as a primer. It also allows the recruitment of the RNA-dependent RNA polymerase to host membranes. Interacts with 3B-2; this interaction allows 3B-2 to act as a primer. Interacts with 3B-3; this interaction allows 3B-3 to act as a primer. Post-translationally, removes six residues from its own C-terminus, generating sLb(pro). In terms of processing, specific enzymatic cleavages in vivo by the viral proteases yield a variety of precursors and mature proteins. The polyprotein seems to be cotranslationally cleaved at the 2A/2B junction by a ribosomal skip from one codon to the next without formation of a peptide bond. This process would release the L-P1-2A peptide from the translational complex. During virion maturation, immature virions are rendered infectious following cleavage of VP0 into VP4 and VP2. This maturation seems to be an autocatalytic event triggered by the presence of RNA in the capsid and is followed by a conformational change of the particle. Post-translationally, myristoylation is required during RNA encapsidation and formation of the mature virus particle. In terms of processing, uridylylated by the polymerase and covalently linked to the 5'-end of genomic RNA. These uridylylated forms act as a nucleotide-peptide primer for the polymerase. The disulfide bond between VP1 and VP2 occurs after release of virus from the host cell.

Its subcellular location is the host nucleus. It is found in the host cytoplasm. The protein localises to the virion. The protein resides in the host endoplasmic reticulum membrane. It localises to the host cytoplasmic vesicle membrane. It carries out the reaction Autocatalytically cleaves itself from the polyprotein of the foot-and-mouth disease virus by hydrolysis of a Lys-|-Gly bond, but then cleaves host cell initiation factor eIF-4G at bonds -Gly-|-Arg- and -Lys-|-Arg-.. The enzyme catalyses a ribonucleoside 5'-triphosphate + H2O = a ribonucleoside 5'-diphosphate + phosphate + H(+). It catalyses the reaction RNA(n) + a ribonucleoside 5'-triphosphate = RNA(n+1) + diphosphate. The catalysed reaction is Selective cleavage of Gln-|-Gly bond in the poliovirus polyprotein. In other picornavirus reactions Glu may be substituted for Gln, and Ser or Thr for Gly.. Its function is as follows. Autocatalytically cleaves itself from the polyprotein at the L/VP0 junction. Also cleaves the host translation initiation factors EIF4G1 and EIF4G3, in order to shut off the capped cellular mRNA transcription. Plays a role in counteracting host innate antiviral response using diverse mechanisms. Possesses a deubiquitinase activity acting on both 'Lys-48' and 'Lys-63'-linked polyubiquitin chains. In turn, inhibits the ubiquitination and subsequent activation of key signaling molecules of type I IFN response such as host RIGI, TBK1, TRAF3 and TRAF6. Inhibits host NF-kappa-B activity by inducing a decrease in RELA mRNA levels. Cleaves a peptide bond in the C-terminus of host ISG15, resulting in the damaging of this modifier that can no longer be attached to target proteins. Also cleaves host G3BP1 and G3BP2 in order to inhibit cytoplasmic stress granules assembly. In terms of biological role, lies on the inner surface of the capsid shell. After binding to the host receptor, the capsid undergoes conformational changes. Capsid protein VP4 is released, capsid protein VP1 N-terminus is externalized, and together, they shape a pore in the host membrane through which the viral genome is translocated into the host cell cytoplasm. After genome has been released, the channel shrinks. Forms an icosahedral capsid of pseudo T=3 symmetry with capsid proteins VP1 and VP3. The capsid is composed of 60 copies of each capsid protein organized in the form of twelve pentamers and encloses the viral positive strand RNA genome. Upon acidifcation in the endosome, dissociates into pentamers. Functionally, forms an icosahedral capsid of pseudo T=3 symmetry with capsid proteins VP2 and VP3. The capsid is composed of 60 copies of each capsid protein organized in the form of twelve pentamers and encloses the viral positive strand RNA genome. Mediates cell entry by attachment to an integrin receptor, usually host ITGAV/ITGB6, via a conserved arginine-glycine-aspartic acid (R-G-D) motif. In addition, targets host MAVS to suppress type I IFN pathway. Upon acidifcation in the endosome, dissociates into pentamers. Its function is as follows. Forms an icosahedral capsid of pseudo T=3 symmetry with capsid proteins VP0 and VP3. The capsid is composed of 60 copies of each capsid protein organized in the form of twelve pentamers and encloses the viral positive strand RNA genome. Upon acidifcation in the endosome, dissociates into pentamers. In terms of biological role, mediates self-processing of the polyprotein by a translational effect termed 'ribosome skipping'. Mechanistically, 2A-mediated cleavage occurs between the C-terminal glycine and the proline of the downstream protein 2B. In the case of foot-and-mouth disease virus, the 2A oligopeptide is post-translationally 'trimmed' from the C-terminus of the upstream protein 1D by 3C proteinase. Plays an essential role in the virus replication cycle by acting as a viroporin. Creates a pore in the host endoplasmic reticulum and as a consequence releases Ca2+ in the cytoplasm of infected cell. In turn, high levels of cytoplasmic calcium may trigger membrane trafficking and transport of viral ER-associated proteins to viroplasms, sites of viral genome replication. Functionally, associates with and induces structural rearrangements of intracellular membranes. Triggers host autophagy by interacting with host BECN1 and thereby promotes viral replication. Participates in viral replication and interacts with host DHX9. Displays RNA-binding, nucleotide binding and NTPase activities. May play a role in virion morphogenesis and viral RNA encapsidation by interacting with the capsid protein VP3. Its function is as follows. Plays important roles in virus replication, virulence and host range. Cooperates with host DDX56 to inhibit IRF3 nuclear translocation and subsequent type I interferon production. In terms of biological role, covalently linked to the 5'-end of both the positive-strand and negative-strand genomic RNAs. Acts as a genome-linked replication primer. Cysteine protease that generates mature viral proteins from the precursor polyprotein. In addition to its proteolytic activity, binds to viral RNA and thus influences viral genome replication. RNA and substrate bind cooperatively to the protease. Functionally, RNA-directed RNA polymerase 3D-POL replicates genomic and antigenomic RNA by recognizing replications specific signals. Covalently attaches UMP to a tyrosine of VPg, which is used to prime RNA synthesis. The positive stranded RNA genome is first replicated at virus induced membranous vesicles, creating a dsRNA genomic replication form. This dsRNA is then used as template to synthesize positive stranded RNA genomes. ss(+)RNA genomes are either translated, replicated or encapsidated. This chain is Genome polyprotein, found in Bos taurus (Bovine).